Consider the following 989-residue polypeptide: Phosphoenolpyruvate carboxylase (989 aa).

Active-site residues include His-175 and Lys-630.

The protein belongs to the PEPCase type 1 family. Mg(2+) is required as a cofactor.

The enzyme catalyses oxaloacetate + phosphate = phosphoenolpyruvate + hydrogencarbonate. Functionally, forms oxaloacetate, a four-carbon dicarboxylic acid source for the tricarboxylic acid cycle. The polypeptide is Phosphoenolpyruvate carboxylase (Prochlorococcus marinus (strain MIT 9301)).